A 345-amino-acid polypeptide reads, in one-letter code: uncharacterized protein (345 aa).

A compositionally biased stretch (polar residues) spans 1–13 (MSKPNTETISVNI). A disordered region spans residues 1 to 23 (MSKPNTETISVNIPESEGVPLPD). The stretch at 283–316 (SLKQRTNILKKQGETLKKNVEDINKDTSNLKRHA) forms a coiled coil.

It localises to the virion. This is an uncharacterized protein from Acanthamoeba polyphaga mimivirus (APMV).